We begin with the raw amino-acid sequence, 327 residues long: Porphobilinogen deaminase (327 aa).

The residue at position 251 (Cys-251) is an S-(dipyrrolylmethanemethyl)cysteine.

It belongs to the HMBS family. Dipyrromethane is required as a cofactor.

The enzyme catalyses 4 porphobilinogen + H2O = hydroxymethylbilane + 4 NH4(+). It participates in porphyrin-containing compound metabolism; protoporphyrin-IX biosynthesis; coproporphyrinogen-III from 5-aminolevulinate: step 2/4. Functionally, catalyzes the tetrapolymerization of the monopyrrole porphobilinogen (PBG) into the hydroxymethylbilane pre-uroporphyrinogen in several discrete steps. In Saccharomyces cerevisiae (strain ATCC 204508 / S288c) (Baker's yeast), this protein is Porphobilinogen deaminase (HEM3).